Consider the following 123-residue polypeptide: uncharacterized protein (123 aa).

A helical transmembrane segment spans residues 5 to 25 (GTLVILFAIILILCIMLLFYY).

It belongs to the asfivirus CP123L family.

Its subcellular location is the host membrane. It is found in the virion. This is an uncharacterized protein from Ornithodoros (relapsing fever ticks).